Consider the following 465-residue polypeptide: uncharacterized protein (465 aa).

Residues 87 to 112 (KTSQQIDSSPPQTPTTSNGSMMTRRQ) show a composition bias toward polar residues. 2 disordered regions span residues 87–169 (KTSQ…SYDD) and 201–244 (EGYI…NNIF). The segment covering 113–139 (NANNAISSNNNTNTNVTNGSSSNTSLN) has biased composition (low complexity). Positions 141 to 157 (GDEEQEEEEEEENDEDS) are enriched in acidic residues. Over residues 217–244 (NRNNNNNNINKNNNNNINNNNNNNNNIF) the composition is skewed to low complexity.

This is an uncharacterized protein from Dictyostelium discoideum (Social amoeba).